Reading from the N-terminus, the 57-residue chain is Large ribosomal subunit protein bL32 (57 aa).

Positions 1 to 20 are enriched in basic residues; it reads MAVPKRRMSRSNTRSRRAQW. Residues 1-22 form a disordered region; that stretch reads MAVPKRRMSRSNTRSRRAQWKA.

The protein belongs to the bacterial ribosomal protein bL32 family.

The polypeptide is Large ribosomal subunit protein bL32 (Mycobacterium sp. (strain JLS)).